We begin with the raw amino-acid sequence, 446 residues long: Ribosomal protein uS12 methylthiotransferase RimO (446 aa).

One can recognise an MTTase N-terminal domain in the interval Pro6–Pro116. Residues Cys15, Cys51, Cys80, Cys148, Cys152, and Cys155 each contribute to the [4Fe-4S] cluster site. Residues Leu134–Ala375 enclose the Radical SAM core domain. Residues Gln378 to Asn446 enclose the TRAM domain.

Belongs to the methylthiotransferase family. RimO subfamily. [4Fe-4S] cluster serves as cofactor.

It localises to the cytoplasm. It catalyses the reaction L-aspartate(89)-[ribosomal protein uS12]-hydrogen + (sulfur carrier)-SH + AH2 + 2 S-adenosyl-L-methionine = 3-methylsulfanyl-L-aspartate(89)-[ribosomal protein uS12]-hydrogen + (sulfur carrier)-H + 5'-deoxyadenosine + L-methionine + A + S-adenosyl-L-homocysteine + 2 H(+). Functionally, catalyzes the methylthiolation of an aspartic acid residue of ribosomal protein uS12. This chain is Ribosomal protein uS12 methylthiotransferase RimO, found in Pasteurella multocida (strain Pm70).